Here is a 60-residue protein sequence, read N- to C-terminus: Large ribosomal subunit protein uL30 (60 aa).

The protein belongs to the universal ribosomal protein uL30 family. As to quaternary structure, part of the 50S ribosomal subunit.

This Shewanella woodyi (strain ATCC 51908 / MS32) protein is Large ribosomal subunit protein uL30.